The sequence spans 162 residues: Large ribosomal subunit protein uL10 (162 aa).

Belongs to the universal ribosomal protein uL10 family. In terms of assembly, part of the ribosomal stalk of the 50S ribosomal subunit. The N-terminus interacts with L11 and the large rRNA to form the base of the stalk. The C-terminus forms an elongated spine to which L12 dimers bind in a sequential fashion forming a multimeric L10(L12)X complex.

Forms part of the ribosomal stalk, playing a central role in the interaction of the ribosome with GTP-bound translation factors. This is Large ribosomal subunit protein uL10 from Aliarcobacter butzleri (strain RM4018) (Arcobacter butzleri).